The primary structure comprises 29 residues: Toxin Bl-4 (29 aa).

This sequence belongs to the long (4 C-C) scorpion toxin superfamily. Sodium channel inhibitor family. Beta subfamily. Expressed by the venom gland.

It is found in the secreted. Its function is as follows. Excitatory insect beta-toxins induce a spastic paralysis. They bind voltage-independently at site-4 of sodium channels (Nav) and shift the voltage of activation toward more negative potentials thereby affecting sodium channel activation and promoting spontaneous and repetitive firing. The fraction to which this protein belongs exhibits low toxicity and induces transient paralysis in all insects tested (the crickets A.domesticus). This chain is Toxin Bl-4, found in Buthacus leptochelys (Egyptian fat-tailed scorpion).